The chain runs to 465 residues: 23S rRNA (uracil(1939)-C(5))-methyltransferase RlmD (465 aa).

A disordered region spans residues 1-22; that stretch reads MSEAVPTSARKSRNAPVAPGPA. In terms of domain architecture, TRAM spans 16-80; that stretch reads PVAPGPAPVL…PSYEQATVVD (65 aa). [4Fe-4S] cluster-binding residues include Cys-93, Cys-99, Cys-102, and Cys-181. Residues Gln-289, Phe-318, Asn-323, Glu-339, Asn-367, and Asp-388 each coordinate S-adenosyl-L-methionine. The active-site Nucleophile is the Cys-421.

Belongs to the class I-like SAM-binding methyltransferase superfamily. RNA M5U methyltransferase family. RlmD subfamily.

It catalyses the reaction uridine(1939) in 23S rRNA + S-adenosyl-L-methionine = 5-methyluridine(1939) in 23S rRNA + S-adenosyl-L-homocysteine + H(+). Its function is as follows. Catalyzes the formation of 5-methyl-uridine at position 1939 (m5U1939) in 23S rRNA. This Burkholderia lata (strain ATCC 17760 / DSM 23089 / LMG 22485 / NCIMB 9086 / R18194 / 383) protein is 23S rRNA (uracil(1939)-C(5))-methyltransferase RlmD.